Consider the following 282-residue polypeptide: Protein canopy homolog 3 (282 aa).

A signal peptide spans 1–33 (MEPLPEPASGPRPRPHRLLLLSLLLLLLPLLPA). The 223-residue stretch at 53-275 (SKCEVCKYVA…EGIQKASPLT (223 aa)) folds into the Saposin B-type domain. Disulfide bonds link C55/C212, C58/C200, and C110/C172. N159 is a glycosylation site (N-linked (GlcNAc...) asparagine). Positions 159–185 (NETSAEVADLKKQCDVLVEEFEEVIED) form a coiled coil. Residues 221-282 (KGDTAALGGK…PLTHSPPDEL (62 aa)) are disordered. Acidic residues predominate over residues 255–266 (DLDGDPSPEEDE).

This sequence belongs to the canopy family. Interacts with HSP90B1; this interaction is disrupted in the presence of ATP. Interacts with TLR1, TLR2, TLR4 and TLR9.

The protein localises to the endoplasmic reticulum. In terms of biological role, toll-like receptor (TLR)-specific co-chaperone for HSP90B1. Required for proper TLR folding, except that of TLR3, and hence controls TLR exit from the endoplasmic reticulum. Consequently, required for both innate and adaptive immune responses. The polypeptide is Protein canopy homolog 3 (CNPY3) (Bos taurus (Bovine)).